A 160-amino-acid polypeptide reads, in one-letter code: uncharacterized protein (160 aa).

The signal sequence occupies residues 1–18; the sequence is MELLSLAILSSFFAVANQ.

This is an uncharacterized protein from Caenorhabditis elegans.